A 438-amino-acid chain; its full sequence is MGSSAGSWRRLEDSEREETDSEPQAPRLDSRSVLWKNAVGFWILGLCNNFSYVVMLSAAHDILKQEQASGNQSHVEPGPTPTPHNSSSRFDCNSISTAAVLLADILPTLVIKLLAPLGLHLLPYSPRVLVSGVCSAGSFVLVAFSQSVGLSLCGVVLASISSGLGEVTFLSLTAFYPSAVISWWSSGTGGAGLLGSLSYLGLTQAGLSPQHTLLSMLGIPVLLLASYFLLLTSPEPLDPGGENEAETAARQPLIGTETPESKPGASWDLSLQERWTVFKGLLWYIIPLVLVYFAEYFINQGLFELLFFRNTSLSHAQQYRWYQMLYQAGVFASRSSLQCCRIRFTWVLALLQCLNLALLLADVCLNFLPSIYLIFIIILYEGLLGGAAYVNTFHNIALETSDKHREFAMEAACISDTLGISLSGVLALPLHDFLCHLP.

A disordered region spans residues 1–27; it reads MGSSAGSWRRLEDSEREETDSEPQAPR. Topologically, residues 1–37 are cytoplasmic; that stretch reads MGSSAGSWRRLEDSEREETDSEPQAPRLDSRSVLWKN. At S14 the chain carries Phosphoserine. A helical transmembrane segment spans residues 38–58; the sequence is AVGFWILGLCNNFSYVVMLSA. Topologically, residues 59–127 are lumenal; the sequence is AHDILKQEQA…GLHLLPYSPR (69 aa). The segment at 67-87 is disordered; that stretch reads QASGNQSHVEPGPTPTPHNSS. N-linked (GlcNAc...) asparagine glycans are attached at residues N71 and N85. The chain crosses the membrane as a helical span at residues 128–148; it reads VLVSGVCSAGSFVLVAFSQSV. Topologically, residues 149-151 are cytoplasmic; that stretch reads GLS. The helical transmembrane segment at 152–172 threads the bilayer; that stretch reads LCGVVLASISSGLGEVTFLSL. Residues 173–182 lie on the Lumenal side of the membrane; it reads TAFYPSAVIS. A helical membrane pass occupies residues 183–203; that stretch reads WWSSGTGGAGLLGSLSYLGLT. The Cytoplasmic segment spans residues 204–277; it reads QAGLSPQHTL…DLSLQERWTV (74 aa). The disordered stretch occupies residues 239-261; that stretch reads PGGENEAETAARQPLIGTETPES. The Lysosomal targeting motif signature appears at 242–244; sequence ENE. Positions 253 to 254 match the Lysosomal targeting motif. Required for AP1G1, AP2A2 and AP3D1 interaction motif; it reads LI. Residues 278 to 298 form a helical membrane-spanning segment; the sequence is FKGLLWYIIPLVLVYFAEYFI. Topologically, residues 299–346 are lumenal; that stretch reads NQGLFELLFFRNTSLSHAQQYRWYQMLYQAGVFASRSSLQCCRIRFTW. Residue N310 is glycosylated (N-linked (GlcNAc...) asparagine). Residues 347–367 traverse the membrane as a helical segment; it reads VLALLQCLNLALLLADVCLNF. Residues 368 to 438 are Cytoplasmic-facing; the sequence is LPSIYLIFII…PLHDFLCHLP (71 aa). A Lysosomal targeting motif motif is present at residues 409 to 419; that stretch reads MEAACISDTLG. C435 is modified (cysteine methyl ester). C435 carries S-farnesyl cysteine lipidation. The propeptide at 436–438 is removed in mature form; the sequence is HLP.

This sequence belongs to the battenin family. Homooligomer. Interacts with DCTN1, KIF3A, RAB7A and RILP. Interacts with CLN5. Interacts with KCNIP3. Post-translationally, highly glycosylated. In terms of processing, farnesylation is important for trafficking to lysosomes. As to expression, expressed throughout the brain, such as, in the cerebral cortex, hippocampus, cerebellum and several different cerebral nuclei (at protein level). In the cerebral cortex, expressed in all cortical layers. In the hippocampus, expressed in the granule cells in the dentate gyrus and the pyramidal cells of the hippocampus proper. In the cerebellum expressed in the granular and molecular layers, and in the Purkinje cell layer.

The protein localises to the lysosome membrane. Its subcellular location is the late endosome. The protein resides in the lysosome. It is found in the membrane raft. It localises to the golgi apparatus. The protein localises to the trans-Golgi network. Its subcellular location is the synapse. The protein resides in the synaptosome. It is found in the early endosome membrane. It localises to the late endosome membrane. The protein localises to the cytoplasmic vesicle. Its subcellular location is the autophagosome. Mediates microtubule-dependent, anterograde transport connecting the Golgi network, endosomes, autophagosomes, lysosomes and plasma membrane, and participates in several cellular processes such as regulation of lysosomal pH, lysosome protein degradation, receptor-mediated endocytosis, autophagy, transport of proteins and lipids from the TGN, apoptosis and synaptic transmission. Facilitates the proteins transport from trans-Golgi network (TGN)-to other membrane compartments such as transport of microdomain-associated proteins to the plasma membrane, IGF2R transport to the lysosome where it regulates the CTSD release leading to regulation of CTSD maturation and thereby APP intracellular processing. Moreover regulates CTSD activity in response to osmotic stress. Also binds galactosylceramide and transports it from the trans Golgi to the rafts, which may have immediate and downstream effects on cell survival by modulating ceramide synthesis. At the plasma membrane, regulates actin-dependent events including filopodia formation, cell migration, and pinocytosis through ARF1-CDC42 pathway and also the cytoskeleton organization through interaction with MYH10 and fodrin leading to the regulation of the plasma membrane association of Na+, K+ ATPase complex. Regulates synaptic transmission in the amygdala, hippocampus, and cerebellum through regulation of synaptic vesicles density and their proximity to active zones leading to modulation of short-term plasticity and age-dependent anxious behavior, learning and memory. Regulates autophagic vacuoles (AVs) maturation by modulating the trafficking between endocytic and autophagolysosomal/lysosomal compartments, which involves vesicle fusion leading to regulation of degradation process. Also participates in cellular homeostasis of compounds such as, water, ions, amino acids, proteins and lipids in several tissue namely in brain and kidney through regulation of their transport and synthesis. This Mus musculus (Mouse) protein is Battenin.